The sequence spans 284 residues: GTP cyclohydrolase MptA (284 aa).

This sequence belongs to the GTP cyclohydrolase IV family. In terms of assembly, homodimer. Fe(2+) is required as a cofactor.

The catalysed reaction is GTP + H2O = 7,8-dihydroneopterin 2',3'-cyclic phosphate + formate + diphosphate + H(+). It participates in cofactor biosynthesis; 5,6,7,8-tetrahydromethanopterin biosynthesis. Its function is as follows. Converts GTP to 7,8-dihydro-D-neopterin 2',3'-cyclic phosphate, the first intermediate in the biosynthesis of coenzyme methanopterin. This is GTP cyclohydrolase MptA from Thermoplasma volcanium (strain ATCC 51530 / DSM 4299 / JCM 9571 / NBRC 15438 / GSS1).